Consider the following 546-residue polypeptide: Protein FAM124A (546 aa).

3 disordered regions span residues 1 to 37 (MDPK…SELS), 285 to 361 (KFPK…QRSK), and 488 to 546 (SSSS…EFYI). Residues 24–36 (SDYSHLSSTSSEL) show a composition bias toward low complexity. A compositionally biased stretch (basic residues) spans 285–302 (KFPKPGRVHHSSEKKRHS). Polar residues-rich tracts occupy residues 304 to 324 (PLPS…SPLN) and 347 to 361 (ANST…QRSK). A compositionally biased stretch (low complexity) spans 488–511 (SSSSATARAAPPAPSTSTLTDSSP).

It belongs to the FAM124 family.

The chain is Protein FAM124A (FAM124A) from Pongo abelii (Sumatran orangutan).